The following is a 200-amino-acid chain: Outer-membrane lipoprotein carrier protein (200 aa).

The signal sequence occupies residues 1-18 (MKAVVFAMVMAVSFNVFA).

This sequence belongs to the LolA family. Monomer.

Its subcellular location is the periplasm. Participates in the translocation of lipoproteins from the inner membrane to the outer membrane. Only forms a complex with a lipoprotein if the residue after the N-terminal Cys is not an aspartate (The Asp acts as a targeting signal to indicate that the lipoprotein should stay in the inner membrane). The sequence is that of Outer-membrane lipoprotein carrier protein from Idiomarina loihiensis (strain ATCC BAA-735 / DSM 15497 / L2-TR).